The following is a 691-amino-acid chain: tRNA-dihydrouridine(47) synthase [NAD(P)(+)]-like (691 aa).

Serine 2 carries the N-acetylserine modification. The tract at residues 55 to 94 is disordered; it reads PPPPSRSVKQNDAADVRAPQSGLVQEKKSKRQLKRERREQ. 2 consecutive C3H1-type zinc fingers follow at residues 94 to 125 and 138 to 163; these read QSTI…HDIE and QCPF…HRDI. Positions 259–286 are disordered; it reads LETEEVRPMKKAKSEDQKNSKTGDVGGV. The span at 262 to 279 shows a compositional bias: basic and acidic residues; sequence EEVRPMKKAKSEDQKNSK. FMN is bound by residues 344–346 and glutamine 398; that span reads PLT. Residue cysteine 429 is the Proton donor of the active site. FMN is bound by residues lysine 468, histidine 498, 531 to 533, and 556 to 557; these read NGD and AR.

The protein belongs to the Dus family. Dus3 subfamily. FMN serves as cofactor.

It carries out the reaction 5,6-dihydrouridine(47) in tRNA + NAD(+) = uridine(47) in tRNA + NADH + H(+). The enzyme catalyses 5,6-dihydrouridine(47) in tRNA + NADP(+) = uridine(47) in tRNA + NADPH + H(+). It catalyses the reaction a 5,6-dihydrouridine in mRNA + NAD(+) = a uridine in mRNA + NADH + H(+). The catalysed reaction is a 5,6-dihydrouridine in mRNA + NADP(+) = a uridine in mRNA + NADPH + H(+). In terms of biological role, catalyzes the synthesis of dihydrouridine, a modified base found in the D-loop of most tRNAs. Specifically modifies U47 in cytoplasmic tRNAs. Catalyzes the synthesis of dihydrouridine in some mRNAs, thereby affecting their translation. This is tRNA-dihydrouridine(47) synthase [NAD(P)(+)]-like from Arabidopsis thaliana (Mouse-ear cress).